A 316-amino-acid chain; its full sequence is Transaldolase (316 aa).

Residue Lys125 is the Schiff-base intermediate with substrate of the active site.

It belongs to the transaldolase family. Type 1 subfamily. In terms of assembly, homodimer.

It is found in the cytoplasm. The catalysed reaction is D-sedoheptulose 7-phosphate + D-glyceraldehyde 3-phosphate = D-erythrose 4-phosphate + beta-D-fructose 6-phosphate. Its pathway is carbohydrate degradation; pentose phosphate pathway; D-glyceraldehyde 3-phosphate and beta-D-fructose 6-phosphate from D-ribose 5-phosphate and D-xylulose 5-phosphate (non-oxidative stage): step 2/3. Its function is as follows. Transaldolase is important for the balance of metabolites in the pentose-phosphate pathway. The polypeptide is Transaldolase (Acidovorax ebreus (strain TPSY) (Diaphorobacter sp. (strain TPSY))).